A 35-amino-acid chain; its full sequence is Neurotoxin (35 aa).

3 cysteine pairs are disulfide-bonded: C7–C27, C14–C32, and C18–C34.

As to expression, expressed by the venom gland.

It localises to the secreted. In terms of biological role, neurotoxin. Decreases the action potential of myelinated nerves in mice and frogs. The protein is Neurotoxin of Buthus sp. (strain IY-2001) (Scorpion).